The chain runs to 474 residues: Phosphomannomutase (474 aa).

The Phosphoserine intermediate role is filled by S101. Positions 101, 242, 244, and 246 each coordinate Mg(2+).

It belongs to the phosphohexose mutase family. Mg(2+) serves as cofactor.

It carries out the reaction alpha-D-mannose 1-phosphate = D-mannose 6-phosphate. The sequence is that of Phosphomannomutase (noeK) from Sinorhizobium fredii (strain NBRC 101917 / NGR234).